The following is a 183-amino-acid chain: Orotate phosphoribosyltransferase (183 aa).

5-phospho-alpha-D-ribose 1-diphosphate is bound by residues R21, K88, and 112-120; that span reads EDVVTTGES. Positions 116 and 144 each coordinate orotate.

The protein belongs to the purine/pyrimidine phosphoribosyltransferase family. PyrE subfamily. Homodimer. The cofactor is Mg(2+).

The enzyme catalyses orotidine 5'-phosphate + diphosphate = orotate + 5-phospho-alpha-D-ribose 1-diphosphate. It functions in the pathway pyrimidine metabolism; UMP biosynthesis via de novo pathway; UMP from orotate: step 1/2. Catalyzes the transfer of a ribosyl phosphate group from 5-phosphoribose 1-diphosphate to orotate, leading to the formation of orotidine monophosphate (OMP). The chain is Orotate phosphoribosyltransferase from Thermus thermophilus (strain ATCC BAA-163 / DSM 7039 / HB27).